The following is a 264-amino-acid chain: Acetylglutamate kinase (264 aa).

Substrate is bound by residues 40–41 (GG), R62, and N158.

The protein belongs to the acetylglutamate kinase family. ArgB subfamily.

It is found in the cytoplasm. It carries out the reaction N-acetyl-L-glutamate + ATP = N-acetyl-L-glutamyl 5-phosphate + ADP. It functions in the pathway amino-acid biosynthesis; L-arginine biosynthesis; N(2)-acetyl-L-ornithine from L-glutamate: step 2/4. Its function is as follows. Catalyzes the ATP-dependent phosphorylation of N-acetyl-L-glutamate. The sequence is that of Acetylglutamate kinase from Cytophaga hutchinsonii (strain ATCC 33406 / DSM 1761 / CIP 103989 / NBRC 15051 / NCIMB 9469 / D465).